Consider the following 301-residue polypeptide: MTTKHDVKTFQGFILTLQEYWAQQGCAIVQPLDMEVGAGTFHPQTFLRSLGPEPMSSAYVQPSRRPTDGRYGENPNRLQHYYQFQVVLKPSPDNIQELYLGSLQALGIDTQIHDIRFVEDNWESPTLGAWGLGWEIWLNGMEVTQFTYFQQVGGIECSPVTGEITYGLERLAMYIQGVDSVYDLVWTDGPLGRITYGDVFHQNEVEQSTYNFEHADVDFMFTLFDQCEKMCQHLLSLEKPLPLPAYEQVMKASHAFNLLDARHAISVTERQRYILRVRTMAKAVAESYYQAREALGFPMCK.

This sequence belongs to the class-II aminoacyl-tRNA synthetase family. As to quaternary structure, tetramer of two alpha and two beta subunits.

It is found in the cytoplasm. It catalyses the reaction tRNA(Gly) + glycine + ATP = glycyl-tRNA(Gly) + AMP + diphosphate. This Shewanella baltica (strain OS223) protein is Glycine--tRNA ligase alpha subunit.